The following is a 138-amino-acid chain: Large ribosomal subunit protein uL16 (138 aa).

Residues 1–19 are compositionally biased toward basic residues; that stretch reads MLIPRKVAHRKQHHPKRTG. The interval 1–22 is disordered; that stretch reads MLIPRKVAHRKQHHPKRTGAAK.

The protein belongs to the universal ribosomal protein uL16 family. As to quaternary structure, part of the 50S ribosomal subunit.

Functionally, binds 23S rRNA and is also seen to make contacts with the A and possibly P site tRNAs. The polypeptide is Large ribosomal subunit protein uL16 (Parafrankia sp. (strain EAN1pec)).